Here is a 294-residue protein sequence, read N- to C-terminus: Elongation factor Ts (294 aa).

Residues 81 to 84 (TDFV) form an involved in Mg(2+) ion dislocation from EF-Tu region.

This sequence belongs to the EF-Ts family.

Its subcellular location is the cytoplasm. Its function is as follows. Associates with the EF-Tu.GDP complex and induces the exchange of GDP to GTP. It remains bound to the aminoacyl-tRNA.EF-Tu.GTP complex up to the GTP hydrolysis stage on the ribosome. The polypeptide is Elongation factor Ts (Lawsonia intracellularis (strain PHE/MN1-00)).